The following is a 107-amino-acid chain: Large ribosomal subunit protein uL23 (107 aa).

It belongs to the universal ribosomal protein uL23 family. As to quaternary structure, part of the 50S ribosomal subunit. Contacts protein L29, and trigger factor when it is bound to the ribosome.

In terms of biological role, one of the early assembly proteins it binds 23S rRNA. One of the proteins that surrounds the polypeptide exit tunnel on the outside of the ribosome. Forms the main docking site for trigger factor binding to the ribosome. In Rhodopirellula baltica (strain DSM 10527 / NCIMB 13988 / SH1), this protein is Large ribosomal subunit protein uL23.